The sequence spans 904 residues: Protein translocase subunit SecA (904 aa).

ATP-binding positions include glutamine 89, 107 to 111 (GEGKT), and aspartate 502. 4 residues coordinate Zn(2+): cysteine 888, cysteine 890, cysteine 899, and histidine 900.

It belongs to the SecA family. As to quaternary structure, monomer and homodimer. Part of the essential Sec protein translocation apparatus which comprises SecA, SecYEG and auxiliary proteins SecDF-YajC and YidC. The cofactor is Zn(2+).

Its subcellular location is the cell inner membrane. The protein localises to the cytoplasm. The catalysed reaction is ATP + H2O + cellular proteinSide 1 = ADP + phosphate + cellular proteinSide 2.. In terms of biological role, part of the Sec protein translocase complex. Interacts with the SecYEG preprotein conducting channel. Has a central role in coupling the hydrolysis of ATP to the transfer of proteins into and across the cell membrane, serving both as a receptor for the preprotein-SecB complex and as an ATP-driven molecular motor driving the stepwise translocation of polypeptide chains across the membrane. In Roseobacter denitrificans (strain ATCC 33942 / OCh 114) (Erythrobacter sp. (strain OCh 114)), this protein is Protein translocase subunit SecA.